A 486-amino-acid chain; its full sequence is Bifunctional protein GlmU (486 aa).

The tract at residues 1-236 is pyrophosphorylase; the sequence is MTDQNLAIVV…SWLVDGINDR (236 aa). Residues 11–14, Lys25, Gln78, and 83–84 each bind UDP-N-acetyl-alpha-D-glucosamine; these read LAAG and GT. A Mg(2+)-binding site is contributed by Asp109. Positions 146, 161, 176, and 234 each coordinate UDP-N-acetyl-alpha-D-glucosamine. Asn234 contacts Mg(2+). Residues 237-257 form a linker region; it reads AQLSEAAAKLNALTVRAWQLA. Positions 258-486 are N-acetyltransferase; sequence GVTVQDPATT…ASNAAEESGE (229 aa). UDP-N-acetyl-alpha-D-glucosamine contacts are provided by Arg339 and Lys357. His369 functions as the Proton acceptor in the catalytic mechanism. Residues Tyr372 and Asn383 each contribute to the UDP-N-acetyl-alpha-D-glucosamine site. Residues Ala386, 392 to 393, and Ala429 contribute to the acetyl-CoA site; that span reads NY. The interval 459-486 is disordered; the sequence is RRPGTDAARAAQRNGAAEASNAAEESGE. A compositionally biased stretch (low complexity) spans 465-486; sequence AARAAQRNGAAEASNAAEESGE.

It in the N-terminal section; belongs to the N-acetylglucosamine-1-phosphate uridyltransferase family. The protein in the C-terminal section; belongs to the transferase hexapeptide repeat family. As to quaternary structure, homotrimer. Mg(2+) serves as cofactor.

It is found in the cytoplasm. It catalyses the reaction alpha-D-glucosamine 1-phosphate + acetyl-CoA = N-acetyl-alpha-D-glucosamine 1-phosphate + CoA + H(+). The catalysed reaction is N-acetyl-alpha-D-glucosamine 1-phosphate + UTP + H(+) = UDP-N-acetyl-alpha-D-glucosamine + diphosphate. The protein operates within nucleotide-sugar biosynthesis; UDP-N-acetyl-alpha-D-glucosamine biosynthesis; N-acetyl-alpha-D-glucosamine 1-phosphate from alpha-D-glucosamine 6-phosphate (route II): step 2/2. Its pathway is nucleotide-sugar biosynthesis; UDP-N-acetyl-alpha-D-glucosamine biosynthesis; UDP-N-acetyl-alpha-D-glucosamine from N-acetyl-alpha-D-glucosamine 1-phosphate: step 1/1. It participates in bacterial outer membrane biogenesis; LPS lipid A biosynthesis. Catalyzes the last two sequential reactions in the de novo biosynthetic pathway for UDP-N-acetylglucosamine (UDP-GlcNAc). The C-terminal domain catalyzes the transfer of acetyl group from acetyl coenzyme A to glucosamine-1-phosphate (GlcN-1-P) to produce N-acetylglucosamine-1-phosphate (GlcNAc-1-P), which is converted into UDP-GlcNAc by the transfer of uridine 5-monophosphate (from uridine 5-triphosphate), a reaction catalyzed by the N-terminal domain. This chain is Bifunctional protein GlmU, found in Leifsonia xyli subsp. xyli (strain CTCB07).